The chain runs to 599 residues: UvrABC system protein C (599 aa).

A GIY-YIG domain is found at 15 to 93; that stretch reads PCPGVYRMLD…IKALQPRYNV (79 aa). Residues 202-237 enclose the UVR domain; the sequence is QQVINELVIRMEEASGQLAFEQAAYYRDRIASLRQI.

Belongs to the UvrC family. In terms of assembly, interacts with UvrB in an incision complex.

It is found in the cytoplasm. Functionally, the UvrABC repair system catalyzes the recognition and processing of DNA lesions. UvrC both incises the 5' and 3' sides of the lesion. The N-terminal half is responsible for the 3' incision and the C-terminal half is responsible for the 5' incision. This chain is UvrABC system protein C, found in Nitrosococcus oceani (strain ATCC 19707 / BCRC 17464 / JCM 30415 / NCIMB 11848 / C-107).